The primary structure comprises 110 residues: uncharacterized protein (110 aa).

Residues 88 to 108 form a helical membrane-spanning segment; the sequence is LTRICLLIFGIGLVVLIFLKL.

Its subcellular location is the membrane. This is an uncharacterized protein from Rickettsia prowazekii (strain Madrid E).